A 513-amino-acid polypeptide reads, in one-letter code: Noroxomaritidine synthase 2 (513 aa).

A helical transmembrane segment spans residues 14–34 (HYPEILIAIACFLIFSLLLSA). Residue Cys-458 coordinates heme.

It belongs to the cytochrome P450 family. Heme serves as cofactor.

It localises to the membrane. The catalysed reaction is 4'-O-methylnorbelladine + reduced [NADPH--hemoprotein reductase] + O2 = (10bR,4aS)-noroxomaritidine + oxidized [NADPH--hemoprotein reductase] + 2 H2O + H(+). The enzyme catalyses 4'-O-methylnorbelladine + reduced [NADPH--hemoprotein reductase] + O2 = (10bS,4aR)-noroxomaritidine + oxidized [NADPH--hemoprotein reductase] + 2 H2O + H(+). The protein operates within alkaloid biosynthesis. In terms of biological role, cytochrome P450 that catalyzes an intramolecular para-para' C-C phenol coupling of 4'-O-methylnorbelladine in alkaloids biosynthesis, including haemanthamine- and crinamine-type alkaloids, promising anticancer agents. Catalyzes the formation of (10bR,4aS)-noroxomaritidine and (10bS,4aR)-noroxomaritidine from 4'-O-methylnorbelladine. This is Noroxomaritidine synthase 2 from Narcissus aff. pseudonarcissus MK-2014 (Daffodil).